Consider the following 598-residue polypeptide: Elongation factor 4 (598 aa).

The tr-type G domain maps to 2–184; that stretch reads QHIRNFSIIA…TVVRRVPPPK (183 aa). Residues 14-19 and 131-134 contribute to the GTP site; these read DHGKST and NKID.

Belongs to the TRAFAC class translation factor GTPase superfamily. Classic translation factor GTPase family. LepA subfamily.

It is found in the cell inner membrane. It carries out the reaction GTP + H2O = GDP + phosphate + H(+). Functionally, required for accurate and efficient protein synthesis under certain stress conditions. May act as a fidelity factor of the translation reaction, by catalyzing a one-codon backward translocation of tRNAs on improperly translocated ribosomes. Back-translocation proceeds from a post-translocation (POST) complex to a pre-translocation (PRE) complex, thus giving elongation factor G a second chance to translocate the tRNAs correctly. Binds to ribosomes in a GTP-dependent manner. This Aromatoleum aromaticum (strain DSM 19018 / LMG 30748 / EbN1) (Azoarcus sp. (strain EbN1)) protein is Elongation factor 4.